A 284-amino-acid chain; its full sequence is Ribosomal RNA small subunit methyltransferase A (284 aa).

The S-adenosyl-L-methionine site is built by Asn-26, Leu-28, Gly-53, Glu-74, Asp-97, and Asn-127.

Belongs to the class I-like SAM-binding methyltransferase superfamily. rRNA adenine N(6)-methyltransferase family. RsmA subfamily.

It is found in the cytoplasm. The catalysed reaction is adenosine(1518)/adenosine(1519) in 16S rRNA + 4 S-adenosyl-L-methionine = N(6)-dimethyladenosine(1518)/N(6)-dimethyladenosine(1519) in 16S rRNA + 4 S-adenosyl-L-homocysteine + 4 H(+). Its function is as follows. Specifically dimethylates two adjacent adenosines (A1518 and A1519) in the loop of a conserved hairpin near the 3'-end of 16S rRNA in the 30S particle. May play a critical role in biogenesis of 30S subunits. This chain is Ribosomal RNA small subunit methyltransferase A, found in Anaeromyxobacter dehalogenans (strain 2CP-1 / ATCC BAA-258).